A 405-amino-acid chain; its full sequence is Argininosuccinate synthase (405 aa).

8–16 (AYSGGLDTS) serves as a coordination point for ATP. Residues Tyr-86 and Ser-91 each contribute to the L-citrulline site. Gly-116 lines the ATP pocket. Residues Thr-118, Asn-122, and Asp-123 each contribute to the L-aspartate site. Asn-122 lines the L-citrulline pocket. 5 residues coordinate L-citrulline: Arg-126, Ser-175, Ser-184, Glu-260, and Tyr-272.

Belongs to the argininosuccinate synthase family. Type 1 subfamily. Homotetramer.

Its subcellular location is the cytoplasm. The enzyme catalyses L-citrulline + L-aspartate + ATP = 2-(N(omega)-L-arginino)succinate + AMP + diphosphate + H(+). Its pathway is amino-acid biosynthesis; L-arginine biosynthesis; L-arginine from L-ornithine and carbamoyl phosphate: step 2/3. In Koribacter versatilis (strain Ellin345), this protein is Argininosuccinate synthase.